Consider the following 226-residue polypeptide: ATP synthase F(0) complex subunit a (226 aa).

6 consecutive transmembrane segments (helical) span residues 5–25 (LFASFIAPTILGLPAAVLIIL), 68–88 (WSLMLMWLIIFIATTNLLGLL), 97–117 (QLSMNLAMAIPLWAGAVTTGF), 138–158 (IPMLVIIETISLFIQPMALAV), 160–180 (LTANITAGHLLMHLIGSATLA), and 189–209 (TLIIFTVLILLTMLEIAVALI).

Belongs to the ATPase A chain family. As to quaternary structure, component of the ATP synthase complex composed at least of ATP5F1A/subunit alpha, ATP5F1B/subunit beta, ATP5MC1/subunit c (homooctomer), MT-ATP6/subunit a, MT-ATP8/subunit 8, ATP5ME/subunit e, ATP5MF/subunit f, ATP5MG/subunit g, ATP5MK/subunit k, ATP5MJ/subunit j, ATP5F1C/subunit gamma, ATP5F1D/subunit delta, ATP5F1E/subunit epsilon, ATP5PF/subunit F6, ATP5PB/subunit b, ATP5PD/subunit d, ATP5PO/subunit OSCP. ATP synthase complex consists of a soluble F(1) head domain (subunits alpha(3) and beta(3)) - the catalytic core - and a membrane F(0) domain - the membrane proton channel (subunits c, a, 8, e, f, g, k and j). These two domains are linked by a central stalk (subunits gamma, delta, and epsilon) rotating inside the F1 region and a stationary peripheral stalk (subunits F6, b, d, and OSCP). Interacts with DNAJC30; interaction is direct.

Its subcellular location is the mitochondrion inner membrane. The catalysed reaction is H(+)(in) = H(+)(out). Functionally, subunit a, of the mitochondrial membrane ATP synthase complex (F(1)F(0) ATP synthase or Complex V) that produces ATP from ADP in the presence of a proton gradient across the membrane which is generated by electron transport complexes of the respiratory chain. ATP synthase complex consist of a soluble F(1) head domain - the catalytic core - and a membrane F(1) domain - the membrane proton channel. These two domains are linked by a central stalk rotating inside the F(1) region and a stationary peripheral stalk. During catalysis, ATP synthesis in the catalytic domain of F(1) is coupled via a rotary mechanism of the central stalk subunits to proton translocation. With the subunit c (ATP5MC1), forms the proton-conducting channel in the F(0) domain, that contains two crucial half-channels (inlet and outlet) that facilitate proton movement from the mitochondrial intermembrane space (IMS) into the matrix. Protons are taken up via the inlet half-channel and released through the outlet half-channel, following a Grotthuss mechanism. The chain is ATP synthase F(0) complex subunit a from Gorilla gorilla gorilla (Western lowland gorilla).